The chain runs to 335 residues: Glycerol-3-phosphate dehydrogenase [NAD(P)+] (335 aa).

NADPH contacts are provided by S10, F11, R31, and K105. Sn-glycerol 3-phosphate is bound by residues K105, G136, and S138. A140 provides a ligand contact to NADPH. Sn-glycerol 3-phosphate is bound by residues K191, D244, S254, R255, and N256. K191 functions as the Proton acceptor in the catalytic mechanism. R255 lines the NADPH pocket. 2 residues coordinate NADPH: V279 and E281.

Belongs to the NAD-dependent glycerol-3-phosphate dehydrogenase family.

It localises to the cytoplasm. The catalysed reaction is sn-glycerol 3-phosphate + NAD(+) = dihydroxyacetone phosphate + NADH + H(+). It catalyses the reaction sn-glycerol 3-phosphate + NADP(+) = dihydroxyacetone phosphate + NADPH + H(+). Its pathway is membrane lipid metabolism; glycerophospholipid metabolism. Catalyzes the reduction of the glycolytic intermediate dihydroxyacetone phosphate (DHAP) to sn-glycerol 3-phosphate (G3P), the key precursor for phospholipid synthesis. The protein is Glycerol-3-phosphate dehydrogenase [NAD(P)+] of Leptospira interrogans serogroup Icterohaemorrhagiae serovar Lai (strain 56601).